A 256-amino-acid polypeptide reads, in one-letter code: Imidazole glycerol phosphate synthase subunit HisF (256 aa).

Catalysis depends on residues D13 and D132.

Belongs to the HisA/HisF family. Heterodimer of HisH and HisF.

The protein resides in the cytoplasm. The catalysed reaction is 5-[(5-phospho-1-deoxy-D-ribulos-1-ylimino)methylamino]-1-(5-phospho-beta-D-ribosyl)imidazole-4-carboxamide + L-glutamine = D-erythro-1-(imidazol-4-yl)glycerol 3-phosphate + 5-amino-1-(5-phospho-beta-D-ribosyl)imidazole-4-carboxamide + L-glutamate + H(+). Its pathway is amino-acid biosynthesis; L-histidine biosynthesis; L-histidine from 5-phospho-alpha-D-ribose 1-diphosphate: step 5/9. IGPS catalyzes the conversion of PRFAR and glutamine to IGP, AICAR and glutamate. The HisF subunit catalyzes the cyclization activity that produces IGP and AICAR from PRFAR using the ammonia provided by the HisH subunit. This is Imidazole glycerol phosphate synthase subunit HisF from Leptospira interrogans serogroup Icterohaemorrhagiae serovar copenhageni (strain Fiocruz L1-130).